The following is a 348-amino-acid chain: Hereditary hemochromatosis protein homolog (348 aa).

The first 22 residues, 1-22 (MGPRARPALFFLILLRTVAAQG), serve as a signal peptide directing secretion. Residues 23–114 (RPPRSHSLRY…IMDNHNHSKE (92 aa)) are alpha-1. Over 23–306 (RPPRSHSLRY…WEPSLSNTLV (284 aa)) the chain is Extracellular. N-linked (GlcNAc...) asparagine glycans are attached at residues asparagine 110, asparagine 130, and asparagine 234. An alpha-2 region spans residues 115–205 (SHTLQVILGC…ELGRGVLDQQ (91 aa)). 2 disulfide bridges follow: cysteine 124/cysteine 187 and cysteine 225/cysteine 282. The alpha-3 stretch occupies residues 206–297 (VPPLVKVTHH…GLDQPLTATW (92 aa)). One can recognise an Ig-like C1-type domain in the interval 207–296 (PPLVKVTHHV…PGLDQPLTAT (90 aa)). Residues 298–306 (EPSLSNTLV) are connecting peptide. A helical transmembrane segment spans residues 307 to 330 (TGVISGIAVCVIIFFIGILFRILR). Residues 331–348 (KRQASRGAMGDYVLGECE) lie on the Cytoplasmic side of the membrane.

It belongs to the MHC class I family. As to quaternary structure, binds TFR through the extracellular domain in a pH-dependent manner.

The protein resides in the cell membrane. Functionally, binds to transferrin receptor (TFR) and reduces its affinity for iron-loaded transferrin. The sequence is that of Hereditary hemochromatosis protein homolog (HFE) from Ceratotherium simum (White rhinoceros).